A 204-amino-acid chain; its full sequence is Pyridoxal 5'-phosphate synthase subunit PdxT (204 aa).

Position 52-54 (52-54 (GES)) interacts with L-glutamine. Cys-84 acts as the Nucleophile in catalysis. Residues Arg-116 and 143–144 (IR) each bind L-glutamine. Active-site charge relay system residues include His-184 and Glu-186.

This sequence belongs to the glutaminase PdxT/SNO family. As to quaternary structure, in the presence of PdxS, forms a dodecamer of heterodimers. Only shows activity in the heterodimer.

The catalysed reaction is aldehydo-D-ribose 5-phosphate + D-glyceraldehyde 3-phosphate + L-glutamine = pyridoxal 5'-phosphate + L-glutamate + phosphate + 3 H2O + H(+). It catalyses the reaction L-glutamine + H2O = L-glutamate + NH4(+). It functions in the pathway cofactor biosynthesis; pyridoxal 5'-phosphate biosynthesis. In terms of biological role, catalyzes the hydrolysis of glutamine to glutamate and ammonia as part of the biosynthesis of pyridoxal 5'-phosphate. The resulting ammonia molecule is channeled to the active site of PdxS. In Pyrobaculum aerophilum (strain ATCC 51768 / DSM 7523 / JCM 9630 / CIP 104966 / NBRC 100827 / IM2), this protein is Pyridoxal 5'-phosphate synthase subunit PdxT.